Consider the following 967-residue polypeptide: Isoleucine--tRNA ligase 2 (967 aa).

The 'HIGH' region motif lies at proline 58–histidine 68. Over residues alanine 437–glycine 446 the composition is skewed to low complexity. The tract at residues alanine 437–leucine 466 is disordered. Residue glutamate 598 participates in L-isoleucyl-5'-AMP binding. The 'KMSKS' region signature appears at lysine 639–serine 643. Lysine 642 lines the ATP pocket. Positions 922, 925, 942, and 945 each coordinate Zn(2+).

The protein belongs to the class-I aminoacyl-tRNA synthetase family. IleS type 1 subfamily. As to quaternary structure, monomer. Zn(2+) is required as a cofactor.

The protein resides in the cytoplasm. The enzyme catalyses tRNA(Ile) + L-isoleucine + ATP = L-isoleucyl-tRNA(Ile) + AMP + diphosphate. In terms of biological role, catalyzes the attachment of isoleucine to tRNA(Ile). As IleRS can inadvertently accommodate and process structurally similar amino acids such as valine, to avoid such errors it has two additional distinct tRNA(Ile)-dependent editing activities. One activity is designated as 'pretransfer' editing and involves the hydrolysis of activated Val-AMP. The other activity is designated 'posttransfer' editing and involves deacylation of mischarged Val-tRNA(Ile). This chain is Isoleucine--tRNA ligase 2, found in Burkholderia mallei (strain ATCC 23344).